The following is a 381-amino-acid chain: Meiotic recombination protein SPO11-1 (381 aa).

The Topo IIA-type catalytic domain occupies 23–162 (EEAATLLHRI…LNVVPVAKGL (140 aa)). Y123 (O-(5'-phospho-DNA)-tyrosine intermediate) is an active-site residue. Residues E209 and D261 each coordinate Mg(2+).

This sequence belongs to the TOP6A family. Requires Mg(2+) as cofactor. In terms of tissue distribution, highly expressed in flowers before pollination. Expressed in roots and shoots.

The protein resides in the nucleus. The enzyme catalyses ATP-dependent breakage, passage and rejoining of double-stranded DNA.. Required for meiotic recombination. Mediates DNA cleavage that forms the double-strand breaks (DSB) that initiate meiotic recombination. May be involved in plant growth and development, and stress tolerance. This chain is Meiotic recombination protein SPO11-1 (SPO11-1), found in Oryza sativa subsp. indica (Rice).